Consider the following 151-residue polypeptide: 3-hydroxyacyl-[acyl-carrier-protein] dehydratase FabZ (151 aa).

His-54 is a catalytic residue.

This sequence belongs to the thioester dehydratase family. FabZ subfamily. In terms of assembly, oligomer. In terms of processing, the N-terminus is blocked.

It localises to the cytoplasm. It carries out the reaction a (3R)-hydroxyacyl-[ACP] = a (2E)-enoyl-[ACP] + H2O. Its function is as follows. Involved in unsaturated fatty acids biosynthesis. Catalyzes the dehydration of short chain beta-hydroxyacyl-ACPs and long chain saturated and unsaturated beta-hydroxyacyl-ACPs. This chain is 3-hydroxyacyl-[acyl-carrier-protein] dehydratase FabZ, found in Escherichia coli (strain SE11).